The chain runs to 439 residues: Ribosomal protein uS12 methylthiotransferase RimO (439 aa).

Residues 3-115 (NKLHIVSLGC…IDELLVEKKS (113 aa)) enclose the MTTase N-terminal domain. [4Fe-4S] cluster-binding residues include Cys12, Cys46, Cys78, Cys146, Cys150, and Cys153. Positions 132–361 (TGSTYHAYIK…GKIAADVMQA (230 aa)) constitute a Radical SAM core domain.

Belongs to the methylthiotransferase family. RimO subfamily. [4Fe-4S] cluster serves as cofactor.

Its subcellular location is the cytoplasm. The catalysed reaction is L-aspartate(89)-[ribosomal protein uS12]-hydrogen + (sulfur carrier)-SH + AH2 + 2 S-adenosyl-L-methionine = 3-methylsulfanyl-L-aspartate(89)-[ribosomal protein uS12]-hydrogen + (sulfur carrier)-H + 5'-deoxyadenosine + L-methionine + A + S-adenosyl-L-homocysteine + 2 H(+). In terms of biological role, catalyzes the methylthiolation of an aspartic acid residue of ribosomal protein uS12. This is Ribosomal protein uS12 methylthiotransferase RimO from Sulfurimonas denitrificans (strain ATCC 33889 / DSM 1251) (Thiomicrospira denitrificans (strain ATCC 33889 / DSM 1251)).